The chain runs to 210 residues: Ribulose-phosphate 3-epimerase (210 aa).

Ser-9 serves as a coordination point for substrate. Positions 34, 36, and 68 each coordinate a divalent metal cation. Asp-36 serves as the catalytic Proton acceptor. Residues His-68, 144–147, 177–179, and 199–200 contribute to the substrate site; these read GFGG, DGG, and GS. Residue Asp-177 participates in a divalent metal cation binding. The Proton donor role is filled by Asp-177.

Belongs to the ribulose-phosphate 3-epimerase family. It depends on a divalent metal cation as a cofactor.

It carries out the reaction D-ribulose 5-phosphate = D-xylulose 5-phosphate. Its pathway is carbohydrate degradation. Functionally, catalyzes the reversible epimerization of D-ribulose 5-phosphate to D-xylulose 5-phosphate. The protein is Ribulose-phosphate 3-epimerase of Serratia marcescens.